The primary structure comprises 368 residues: MSESPKKVIVGMSGGVDSSVSAWLLQQQGYQVEGLFMKNWEEDDGEEYCTAAADLADAQAVCDKLGIELHTVNFAAEYWDNVFELFLEEYKAGRTPNPDILCNKEIKFKAFLEFAAEDLGADYIATGHYVRRADVDGKSRLLRGLDGNKDQSYFLYTLGHEQIAQSLFPVGELEKPQVRKIAEDLGLITAKKKDSTGICFIGERKFREFLGRYLPAQPGKIITVDGDEIGQHQGLMYHTLGQRKGLGIGGTKEGTEDPWYVVDKDVENNILVVAQGHEHPRLMSVGLIAQQLHWVDREPFSGTLRCTVKTRYRQTDIPCTVKALDDERIEVIFDEPVAAVTPGQSAVFYNGEVCLGGGIIEQRLPLPV.

Residues 11–18 (GMSGGVDS) and Met37 contribute to the ATP site. The segment at 97-99 (NPD) is interaction with target base in tRNA. Residue Cys102 is the Nucleophile of the active site. Cys102 and Cys199 are disulfide-bonded. Residue Gly127 coordinates ATP. Residues 149 to 151 (KDQ) are interaction with tRNA. The Cysteine persulfide intermediate role is filled by Cys199. Residues 311–312 (RY) form an interaction with tRNA region.

Belongs to the MnmA/TRMU family. Interacts with TusE.

The protein resides in the cytoplasm. It catalyses the reaction S-sulfanyl-L-cysteinyl-[protein] + uridine(34) in tRNA + AH2 + ATP = 2-thiouridine(34) in tRNA + L-cysteinyl-[protein] + A + AMP + diphosphate + H(+). Its function is as follows. Catalyzes the 2-thiolation of uridine at the wobble position (U34) of tRNA(Lys), tRNA(Glu) and tRNA(Gln), leading to the formation of s(2)U34, the first step of tRNA-mnm(5)s(2)U34 synthesis. Sulfur is provided by IscS, via a sulfur-relay system. Binds ATP and its substrate tRNAs. This Citrobacter koseri (strain ATCC BAA-895 / CDC 4225-83 / SGSC4696) protein is tRNA-specific 2-thiouridylase MnmA.